The following is a 249-amino-acid chain: ATP synthase subunit a, chloroplastic (249 aa).

5 consecutive transmembrane segments (helical) span residues 40–60, 97–117, 136–156, 201–221, and 222–242; these read QVLI…VIAI, VPFI…GALL, INTT…AGLS, LVVV…VMFL, and GLFT…AYIG.

This sequence belongs to the ATPase A chain family. In terms of assembly, F-type ATPases have 2 components, CF(1) - the catalytic core - and CF(0) - the membrane proton channel. CF(1) has five subunits: alpha(3), beta(3), gamma(1), delta(1), epsilon(1). CF(0) has four main subunits: a, b, b' and c.

It localises to the plastid. Its subcellular location is the chloroplast thylakoid membrane. Key component of the proton channel; it plays a direct role in the translocation of protons across the membrane. This is ATP synthase subunit a, chloroplastic from Barbarea verna (Land cress).